The primary structure comprises 925 residues: Probable disease resistance protein At1g61310 (925 aa).

The stretch at 25–69 (GKSYIRTLEKNLRALQREMEDLRATQHEVQNKVAREESRHQQRLE) forms a coiled coil. Residues 134 to 154 (NFDEVSQPPPRSEVEERPTQP) form a disordered region. One can recognise an NB-ARC domain in the interval 139-442 (SQPPPRSEVE…CEGFIGEDQV (304 aa)). 181–188 (GMGGVGKT) is a binding site for ATP. LRR repeat units follow at residues 525-546 (AVRR…SKCS), 547-568 (ELTT…FIRY), 571-594 (KLVV…SGLV), 595-617 (SLQY…KELK), 618-640 (KLTF…SRLL), and 641-663 (SLRV…KELQ).

It belongs to the disease resistance NB-LRR family.

Functionally, probable disease resistance protein. This is Probable disease resistance protein At1g61310 from Arabidopsis thaliana (Mouse-ear cress).